The primary structure comprises 604 residues: Ectonucleoside triphosphate diphosphohydrolase 7 (604 aa).

Topologically, residues 1 to 28 are cytoplasmic; that stretch reads MARISFSYLCPASWYFTVPTVSPFLRQR. The chain crosses the membrane as a helical span at residues 29–49; the sequence is VAFLGLFFISCLLLLMLIIDF. Residues 50 to 546 lie on the Vesicular side of the membrane; the sequence is RHWSASLPRD…QAHGSWFRLS (497 aa). Glu217 acts as the Proton acceptor in catalysis. The N-linked (GlcNAc...) asparagine glycan is linked to Asn330. Cysteines 448 and 477 form a disulfide. The chain crosses the membrane as a helical span at residues 547–567; the sequence is FVYNHYLFFACILVVLLAIFL. The Cytoplasmic segment spans residues 568-604; sequence YLLRLRRIHHRQTRASAPLDLLWLEEVVPMMGVQVGP.

This sequence belongs to the GDA1/CD39 NTPase family. Ca(2+) is required as a cofactor. Mg(2+) serves as cofactor.

The protein resides in the cytoplasmic vesicle membrane. The enzyme catalyses a ribonucleoside 5'-triphosphate + H2O = a ribonucleoside 5'-diphosphate + phosphate + H(+). It catalyses the reaction UTP + H2O = UDP + phosphate + H(+). The catalysed reaction is GTP + H2O = GDP + phosphate + H(+). It carries out the reaction CTP + H2O = CDP + phosphate + H(+). Its function is as follows. Catalyzes the hydrolysis of nucleoside triphosphates and diphosphates in a calcium- or magnesium-dependent manner. Preferentially hydrolyzes nucleoside 5'-triphosphates, with substrate preference for UTP &gt; GTP &gt; CTP. Hydrolyzes ATP and nucleoside diphosphates only to a minor extent. The sequence is that of Ectonucleoside triphosphate diphosphohydrolase 7 (ENTPD7) from Homo sapiens (Human).